Here is a 408-residue protein sequence, read N- to C-terminus: Aminoacylase-1 (408 aa).

A Zn(2+)-binding site is contributed by His80. The active site involves Asp82. Asp113 serves as a coordination point for Zn(2+). Glu147 (proton acceptor) is an active-site residue. Zn(2+) is bound by residues Glu148, Glu175, and His373.

This sequence belongs to the peptidase M20A family. Homodimer. Interacts with SPHK1. The cofactor is Zn(2+). In terms of tissue distribution, expression is highest in kidney, strong in brain and weaker in placenta and spleen.

The protein resides in the cytoplasm. It carries out the reaction an N-acyl-L-amino acid + H2O = an L-alpha-amino acid + a carboxylate. It catalyses the reaction N-acetyl-L-methionine + H2O = L-methionine + acetate. The enzyme catalyses N-acetyl-L-glutamine + H2O = L-glutamine + acetate. In terms of biological role, catalyzes the hydrolysis of N-acetylated amino acids to acetate and free amino acids. The protein is Aminoacylase-1 (ACY1) of Homo sapiens (Human).